A 617-amino-acid polypeptide reads, in one-letter code: Vacuolar protein sorting-associated protein 33B (617 aa).

An N-acetylalanine modification is found at Ala-2.

Belongs to the STXBP/unc-18/SEC1 family. Interacts with RAB11A and VIPAS39. Interacts with RAB25. Associates with adapter protein complex 3 (AP-3), clathrin:AP-3 and clathrin:HGS complexes. As to quaternary structure, (Microbial infection) Interacts with M.tuberculosis PtpA. In terms of processing, phosphorylated on tyrosine residues. Post-translationally, (Microbial infection) Dephosphorylated by M.tuberculosis PtpA, which induces the reduction of host phagolysosome fusion in M.tuberculosis-infected macrophages. Ubiquitous; highly expressed in testis and low expression in the lung.

The protein localises to the late endosome membrane. It localises to the lysosome membrane. Its subcellular location is the early endosome. The protein resides in the cytoplasmic vesicle. It is found in the clathrin-coated vesicle. The protein localises to the recycling endosome. May play a role in vesicle-mediated protein trafficking to lysosomal compartments and in membrane docking/fusion reactions of late endosomes/lysosomes. Required for proper trafficking and targeting of the collagen-modifying enzyme lysyl hydroxylase 3 (LH3) to intracellular collagen. Mediates phagolysosomal fusion in macrophages. Proposed to be involved in endosomal maturation implicating VIPAS39. In epithelial cells, the VPS33B:VIPAS39 complex may play a role in the apical recycling pathway and in the maintenance of the apical-basolateral polarity. Seems to be involved in the sorting of specific cargos from the trans-Golgi network to alpha-granule-destined multivesicular bodies (MVBs) promoting MVBs maturation in megakaryocytes. In Homo sapiens (Human), this protein is Vacuolar protein sorting-associated protein 33B (VPS33B).